The primary structure comprises 439 residues: Enolase (439 aa).

Gln-163 provides a ligand contact to (2R)-2-phosphoglycerate. The Proton donor role is filled by Glu-205. Residues Asp-242, Glu-287, and Asp-314 each contribute to the Mg(2+) site. Residues Lys-339, Arg-368, Ser-369, and Lys-390 each contribute to the (2R)-2-phosphoglycerate site. Lys-339 serves as the catalytic Proton acceptor.

Belongs to the enolase family. Mg(2+) serves as cofactor.

It localises to the cytoplasm. Its subcellular location is the secreted. The protein localises to the cell surface. It carries out the reaction (2R)-2-phosphoglycerate = phosphoenolpyruvate + H2O. Its pathway is carbohydrate degradation; glycolysis; pyruvate from D-glyceraldehyde 3-phosphate: step 4/5. Its function is as follows. Catalyzes the reversible conversion of 2-phosphoglycerate (2-PG) into phosphoenolpyruvate (PEP). It is essential for the degradation of carbohydrates via glycolysis. The chain is Enolase from Levilactobacillus brevis (strain ATCC 367 / BCRC 12310 / CIP 105137 / JCM 1170 / LMG 11437 / NCIMB 947 / NCTC 947) (Lactobacillus brevis).